Consider the following 261-residue polypeptide: Maspardin (261 aa).

The 73-residue stretch at 87–159 (FCDGFRKLLD…NSFWLMPAFM (73 aa)) folds into the AB hydrolase-1 domain. Ser257 carries the post-translational modification Phosphoserine.

Belongs to the AB hydrolase superfamily. As to quaternary structure, interacts with CD4. Interacts with ALDH16A1.

It is found in the cytoplasm. Functionally, may play a role as a negative regulatory factor in CD4-dependent T-cell activation. The sequence is that of Maspardin (Spg21) from Rattus norvegicus (Rat).